We begin with the raw amino-acid sequence, 205 residues long: Urease accessory protein UreG (205 aa).

14-21 (GPVGSGKT) is a binding site for GTP.

It belongs to the SIMIBI class G3E GTPase family. UreG subfamily. Homodimer. UreD, UreF and UreG form a complex that acts as a GTP-hydrolysis-dependent molecular chaperone, activating the urease apoprotein by helping to assemble the nickel containing metallocenter of UreC. The UreE protein probably delivers the nickel.

The protein localises to the cytoplasm. Facilitates the functional incorporation of the urease nickel metallocenter. This process requires GTP hydrolysis, probably effectuated by UreG. The polypeptide is Urease accessory protein UreG (Escherichia coli O157:H7).